The following is a 401-amino-acid chain: S-adenosylmethionine synthase (401 aa).

Glycine 136 to aspartate 141 is a binding site for ATP.

Belongs to the AdoMet synthase 2 family. It depends on Mg(2+) as a cofactor.

The catalysed reaction is L-methionine + ATP + H2O = S-adenosyl-L-methionine + phosphate + diphosphate. Its pathway is amino-acid biosynthesis; S-adenosyl-L-methionine biosynthesis; S-adenosyl-L-methionine from L-methionine: step 1/1. In terms of biological role, catalyzes the formation of S-adenosylmethionine from methionine and ATP. This chain is S-adenosylmethionine synthase (mat), found in Pyrococcus abyssi (strain GE5 / Orsay).